The primary structure comprises 403 residues: Alkaline protease 1 (403 aa).

The first 21 residues, 1-21 (MLSIKRTLLLLGAVLPAVFGA), serve as a signal peptide directing secretion. The propeptide occupies 22 to 125 (PVQETRRAAQ…QIWYIDALTT (104 aa)). Residues 36-120 (KYIVTFKPGT…HVEEDQIWYI (85 aa)) form the Inhibitor I9 domain. In terms of domain architecture, Peptidase S8 spans 130–403 (PWGLGSISHK…PNKLAYNGNA (274 aa)). Residues Asp-162 and His-193 each act as charge relay system in the active site. N-linked (GlcNAc...) asparagine glycosylation is found at Asn-253 and Asn-307. Ser-349 acts as the Charge relay system in catalysis.

Belongs to the peptidase S8 family.

The protein resides in the secreted. The catalysed reaction is Hydrolysis of proteins with broad specificity, and of Bz-Arg-OEt &gt; Ac-Tyr-OEt. Does not hydrolyze peptide amides.. Functionally, secreted alkaline protease that allows assimilation of proteinaceous substrates. This chain is Alkaline protease 1 (alp1), found in Neosartorya fischeri (strain ATCC 1020 / DSM 3700 / CBS 544.65 / FGSC A1164 / JCM 1740 / NRRL 181 / WB 181) (Aspergillus fischerianus).